A 236-amino-acid chain; its full sequence is Uridylate kinase (236 aa).

10–13 (KLSG) is a binding site for ATP. Gly52 provides a ligand contact to UMP. Gly53 and Arg57 together coordinate ATP. UMP contacts are provided by residues Asp72 and 133–140 (TGNPFFTT). 3 residues coordinate ATP: Thr160, Tyr166, and Asp169.

It belongs to the UMP kinase family. As to quaternary structure, homohexamer.

It is found in the cytoplasm. The enzyme catalyses UMP + ATP = UDP + ADP. The protein operates within pyrimidine metabolism; CTP biosynthesis via de novo pathway; UDP from UMP (UMPK route): step 1/1. Its activity is regulated as follows. Inhibited by UTP. In terms of biological role, catalyzes the reversible phosphorylation of UMP to UDP. This Parabacteroides distasonis (strain ATCC 8503 / DSM 20701 / CIP 104284 / JCM 5825 / NCTC 11152) protein is Uridylate kinase.